The sequence spans 265 residues: Hydroxyethylthiazole kinase (265 aa).

Methionine 50 is a substrate binding site. Residues arginine 125 and threonine 171 each contribute to the ATP site. Glycine 198 is a substrate binding site.

Belongs to the Thz kinase family. Mg(2+) is required as a cofactor.

It catalyses the reaction 5-(2-hydroxyethyl)-4-methylthiazole + ATP = 4-methyl-5-(2-phosphooxyethyl)-thiazole + ADP + H(+). The protein operates within cofactor biosynthesis; thiamine diphosphate biosynthesis; 4-methyl-5-(2-phosphoethyl)-thiazole from 5-(2-hydroxyethyl)-4-methylthiazole: step 1/1. Its function is as follows. Catalyzes the phosphorylation of the hydroxyl group of 4-methyl-5-beta-hydroxyethylthiazole (THZ). This is Hydroxyethylthiazole kinase from Salmonella paratyphi A (strain ATCC 9150 / SARB42).